The following is a 1055-amino-acid chain: DIS3-like exonuclease 2 (1055 aa).

Disordered stretches follow at residues 1–109 and 229–249; these read MKSA…SSPE and SAAKPEGTNSPPEKDDKKARQ. A compositionally biased stretch (basic residues) spans 17–32; it reads HKKKRNRPQKQNRRSK. Positions 39–59 are enriched in basic and acidic residues; it reads EDAHVEESLDGRDSSRSKAKD. Residues 97-108 show a composition bias toward low complexity; that stretch reads PRRSASPLLSSP. Positions 488 and 497 each coordinate Mg(2+).

This sequence belongs to the RNR ribonuclease family. DIS3L2 subfamily. Mg(2+) is required as a cofactor. Mn(2+) serves as cofactor. In terms of tissue distribution, widely expressed.

It localises to the cytoplasm. Its subcellular location is the P-body. Its function is as follows. 3'-5'-exoribonuclease that specifically recognizes RNAs polyuridylated at their 3' end and mediates their degradation. Component of an exosome-independent RNA degradation pathway that mediates degradation of cytoplasmic mRNAs that have been deadenylated and subsequently uridylated at their 3'. In Arabidopsis thaliana (Mouse-ear cress), this protein is DIS3-like exonuclease 2 (SOV).